Consider the following 631-residue polypeptide: Coiled-coil domain-containing protein 93 (631 aa).

Disordered stretches follow at residues M1–Q23 and Q214–D243. The sufficient for interaction with CCDC22 stretch occupies residues M1–D430. Over residues S215–T225 the composition is skewed to basic and acidic residues. 3 positions are modified to phosphoserine: S298, S301, and S305. The stretch at L309–S631 forms a coiled coil. Residues L421 to T433 are compositionally biased toward basic and acidic residues. The interval L421–M447 is disordered. The sufficient for interaction with WASHC2C stretch occupies residues T448–S631.

The protein belongs to the CCDC93 family. As to quaternary structure, component of the commander complex consisting of the CCC subcomplex and the retriever subcomplex. Component of the CCC (COMMD/CCDC22/CCDC93) subcomplex consisting of COMMD1, COMMD2, COMMD3, COMMD4, COMMD5, COMMD6, COMMD7, COMMD8, COMMD9, COMMD10, CCDC22 and CCDC93. Forms a coiled-coil heterodimer with CCDC22; this heterodimer interacts with the guanine nucleotide exchange factor DENND10; the interaction is direct. Interacts with WASHC1. Interacts directly with WASHC2C. Interacts with SNX17 and SNX31.

Its subcellular location is the early endosome. Its function is as follows. Component of the commander complex that is essential for endosomal recycling of transmembrane cargos; the commander complex is composed of composed of the CCC subcomplex and the retriever subcomplex. Component of the CCC complex, which is involved in the regulation of endosomal recycling of surface proteins, including integrins, signaling receptor and channels. The CCC complex associates with SNX17, retriever and WASH complexes to prevent lysosomal degradation and promote cell surface recycling of numerous cargos such as integrins ITGA5:ITGB1. Involved in copper-dependent ATP7A trafficking between the trans-Golgi network and vesicles in the cell periphery; the function is proposed to depend on its association within the CCC complex and cooperation with the WASH complex on early endosomes and is dependent on its interaction with WASHC2C. Functionally, (Microbial infection) The CCC complex, in collaboration with the heterotrimeric retriever complex, mediates the exit of human papillomavirus to the cell surface. This Homo sapiens (Human) protein is Coiled-coil domain-containing protein 93 (CCDC93).